Here is a 179-residue protein sequence, read N- to C-terminus: Large ribosomal subunit protein uL5 (179 aa).

The protein belongs to the universal ribosomal protein uL5 family. Part of the 50S ribosomal subunit; part of the 5S rRNA/L5/L18/L25 subcomplex. Contacts the 5S rRNA and the P site tRNA. Forms a bridge to the 30S subunit in the 70S ribosome.

Its function is as follows. This is one of the proteins that bind and probably mediate the attachment of the 5S RNA into the large ribosomal subunit, where it forms part of the central protuberance. In the 70S ribosome it contacts protein S13 of the 30S subunit (bridge B1b), connecting the 2 subunits; this bridge is implicated in subunit movement. Contacts the P site tRNA; the 5S rRNA and some of its associated proteins might help stabilize positioning of ribosome-bound tRNAs. In Pseudomonas syringae pv. tomato (strain ATCC BAA-871 / DC3000), this protein is Large ribosomal subunit protein uL5.